A 449-amino-acid polypeptide reads, in one-letter code: Ribosomal protein uS12 methylthiotransferase RimO (449 aa).

Residues 15–125 (PRISFVSLGC…VLAAVHEAVP (111 aa)) enclose the MTTase N-terminal domain. 6 residues coordinate [4Fe-4S] cluster: cysteine 24, cysteine 60, cysteine 89, cysteine 156, cysteine 160, and cysteine 163. The region spanning 142-379 (LTPRHYAYLK…MRTQQKVSAR (238 aa)) is the Radical SAM core domain. The 67-residue stretch at 382–448 (KRKVGTRQSV…PYDLSGTAVG (67 aa)) folds into the TRAM domain.

It belongs to the methylthiotransferase family. RimO subfamily. Requires [4Fe-4S] cluster as cofactor.

It is found in the cytoplasm. It catalyses the reaction L-aspartate(89)-[ribosomal protein uS12]-hydrogen + (sulfur carrier)-SH + AH2 + 2 S-adenosyl-L-methionine = 3-methylsulfanyl-L-aspartate(89)-[ribosomal protein uS12]-hydrogen + (sulfur carrier)-H + 5'-deoxyadenosine + L-methionine + A + S-adenosyl-L-homocysteine + 2 H(+). Its function is as follows. Catalyzes the methylthiolation of an aspartic acid residue of ribosomal protein uS12. The chain is Ribosomal protein uS12 methylthiotransferase RimO from Xanthobacter autotrophicus (strain ATCC BAA-1158 / Py2).